The sequence spans 182 residues: Small heat shock protein hspG1 (182 aa).

Positions 43–182 constitute a sHSP domain; it reads IKRIDIIPSM…SNSSFKININ (140 aa).

This sequence belongs to the small heat shock protein (HSP20) family.

The protein is Small heat shock protein hspG1 (hspG1) of Dictyostelium discoideum (Social amoeba).